A 264-amino-acid polypeptide reads, in one-letter code: Putative hydro-lyase Cgl2544/cg2803 (264 aa).

It belongs to the D-glutamate cyclase family.

In Corynebacterium glutamicum (strain ATCC 13032 / DSM 20300 / JCM 1318 / BCRC 11384 / CCUG 27702 / LMG 3730 / NBRC 12168 / NCIMB 10025 / NRRL B-2784 / 534), this protein is Putative hydro-lyase Cgl2544/cg2803.